A 107-amino-acid chain; its full sequence is MAPPLPRTPTPTHPHSHAPPLPRTPTPAHPHSHAPPLPRTPTPTHPHSHAPPRSIQHRQGKDTKVNLYFPIDSKNPLSFLLGPTLKTRWCVVPVSFTFPLPDTDWLV.

Residues 1 to 44 (MAPPLPRTPTPTHPHSHAPPLPRTPTPAHPHSHAPPLPRTPTPT) are compositionally biased toward pro residues. A disordered region spans residues 1 to 63 (MAPPLPRTPT…SIQHRQGKDT (63 aa)). 3 tandem repeats follow at residues 2–17 (APPLPRTPTPTHPHSH), 18–33 (APPLPRTPTPAHPHSH), and 34–49 (APPLPRTPTPTHPHSH). The segment at 2–49 (APPLPRTPTPTHPHSHAPPLPRTPTPAHPHSHAPPLPRTPTPTHPHSH) is 3 X 17 AA tandem repeats. Positions 46 to 58 (PHSHAPPRSIQHR) are enriched in basic residues.

In Homo sapiens (Human), this protein is Latency-related protein 2.